A 287-amino-acid chain; its full sequence is MNLLTKERGLAYVQLARIDKPIGTLLLLWPTLWALWLAADGLPDLWTLLVFVVGVFLMRSAGCVINDYADRNFDGHVKRTAGRPLPMGKVKPREVLALFAVLALISFALVLTMNPLTIGLSFAALLLAVCYPFMKRYIPIPQLVLGMAFSWSIPMAYAAQANALPAVAWLVFLANLLWTIAYDTQYAMVDRDDDLKLGLKSSAILFGRHDKRIIGALQLLTLLILLLVGQLSELGSSYYWSLLAAAALFVYQQRLIRERQREACFQAFLNNNYVGALIFAGVVINYL.

8 consecutive transmembrane segments (helical) span residues 21-39 (PIGTLLLLWPTLWALWLAA), 95-115 (VLALFAVLALISFALVLTMNP), 116-136 (LTIGLSFAALLLAVCYPFMKR), 138-158 (IPIPQLVLGMAFSWSIPMAYA), 161-181 (ANALPAVAWLVFLANLLWTIA), 213-233 (IIGALQLLTLLILLLVGQLSE), 234-251 (LGSSYYWSLLAAAALFVY), and 264-284 (CFQAFLNNNYVGALIFAGVVI).

It belongs to the UbiA prenyltransferase family. Requires Mg(2+) as cofactor.

Its subcellular location is the cell inner membrane. It carries out the reaction all-trans-octaprenyl diphosphate + 4-hydroxybenzoate = 4-hydroxy-3-(all-trans-octaprenyl)benzoate + diphosphate. It participates in cofactor biosynthesis; ubiquinone biosynthesis. Its function is as follows. Catalyzes the prenylation of para-hydroxybenzoate (PHB) with an all-trans polyprenyl group. Mediates the second step in the final reaction sequence of ubiquinone-8 (UQ-8) biosynthesis, which is the condensation of the polyisoprenoid side chain with PHB, generating the first membrane-bound Q intermediate 3-octaprenyl-4-hydroxybenzoate. This Aeromonas hydrophila subsp. hydrophila (strain ATCC 7966 / DSM 30187 / BCRC 13018 / CCUG 14551 / JCM 1027 / KCTC 2358 / NCIMB 9240 / NCTC 8049) protein is 4-hydroxybenzoate octaprenyltransferase.